The following is an 821-amino-acid chain: DNA ligase (821 aa).

NAD(+) contacts are provided by residues 33-37, 82-83, and Glu113; these read DVDYD and SL. The active-site N6-AMP-lysine intermediate is the Lys115. NAD(+) contacts are provided by Arg136, Glu173, Lys290, and Lys314. Zn(2+)-binding residues include Cys408, Cys411, Cys426, and Cys432. Residues 741 to 821 form the BRCT domain; sequence IVAGPLDGQT…RLLAYLAEHE (81 aa).

This sequence belongs to the NAD-dependent DNA ligase family. LigA subfamily. Mg(2+) serves as cofactor. Mn(2+) is required as a cofactor.

It catalyses the reaction NAD(+) + (deoxyribonucleotide)n-3'-hydroxyl + 5'-phospho-(deoxyribonucleotide)m = (deoxyribonucleotide)n+m + AMP + beta-nicotinamide D-nucleotide.. In terms of biological role, DNA ligase that catalyzes the formation of phosphodiester linkages between 5'-phosphoryl and 3'-hydroxyl groups in double-stranded DNA using NAD as a coenzyme and as the energy source for the reaction. It is essential for DNA replication and repair of damaged DNA. This Stenotrophomonas maltophilia (strain R551-3) protein is DNA ligase.